We begin with the raw amino-acid sequence, 218 residues long: DNA endonuclease I-ChuI (218 aa).

The protein belongs to the LAGLIDADG endonuclease family.

It is found in the plastid. It localises to the chloroplast. Functionally, probable endonuclease involved in intron homing. Encoded in the group-I intron of the subunit rRNA-encoding gene (rrnL), it generates a staggered cut with 4-nt (CTCG) 3'-OH overhangs 2 bp downstream from the intron insertion site. The protein is DNA endonuclease I-ChuI of Chlamydomonas applanata (Chlamydomonas humicola).